Consider the following 141-residue polypeptide: Nucleoside diphosphate kinase (141 aa).

Residues K11, F59, R87, T93, R104, and N114 each contribute to the ATP site. H117 functions as the Pros-phosphohistidine intermediate in the catalytic mechanism.

The protein belongs to the NDK family. Homotetramer. Requires Mg(2+) as cofactor.

It is found in the cytoplasm. The catalysed reaction is a 2'-deoxyribonucleoside 5'-diphosphate + ATP = a 2'-deoxyribonucleoside 5'-triphosphate + ADP. The enzyme catalyses a ribonucleoside 5'-diphosphate + ATP = a ribonucleoside 5'-triphosphate + ADP. Functionally, major role in the synthesis of nucleoside triphosphates other than ATP. The ATP gamma phosphate is transferred to the NDP beta phosphate via a ping-pong mechanism, using a phosphorylated active-site intermediate. The polypeptide is Nucleoside diphosphate kinase (Herminiimonas arsenicoxydans).